Here is a 124-residue protein sequence, read N- to C-terminus: Large ribosomal subunit protein eL33 (124 aa).

Position 2 is an N-acetylalanine (alanine 2).

It belongs to the eukaryotic ribosomal protein eL33 family.

This is Large ribosomal subunit protein eL33 from Caenorhabditis elegans.